A 104-amino-acid polypeptide reads, in one-letter code: Pterin-4-alpha-carbinolamine dehydratase (104 aa).

At alanine 2 the chain carries N-acetylalanine. Substrate is bound by residues 61–63 (DHH) and 78–81 (STHE).

This sequence belongs to the pterin-4-alpha-carbinolamine dehydratase family. As to quaternary structure, homotetramer and homodimer. Heterotetramer with HNF1A; formed by a dimer of dimers. Interacts with HNF1B (via HNF-p1 domain); the interaction increases HNF1B transactivation activity.

It localises to the cytoplasm. It is found in the nucleus. It catalyses the reaction (4aS,6R)-4a-hydroxy-L-erythro-5,6,7,8-tetrahydrobiopterin = (6R)-L-erythro-6,7-dihydrobiopterin + H2O. Its function is as follows. Involved in tetrahydrobiopterin biosynthesis. Seems to both prevent the formation of 7-pterins and accelerate the formation of quinonoid-BH2. Coactivator for HNF1A-dependent transcription. Regulates the dimerization of homeodomain protein HNF1A and enhances its transcriptional activity. Also acts as a coactivator for HNF1B-dependent transcription. This is Pterin-4-alpha-carbinolamine dehydratase (PCBD1) from Bos taurus (Bovine).